We begin with the raw amino-acid sequence, 1378 residues long: Macrophage-stimulating protein receptor (1378 aa).

Residues 1-23 (MGLPLPLLQSSLLLMLLLRLSAA) form the signal peptide. The Extracellular segment spans residues 25–960 (TNLNWQCPRI…RSSPGRASQR (936 aa)). In terms of domain architecture, Sema spans 33–524 (RIPYAASRDF…SGDQVFKVPI (492 aa)). The N-linked (GlcNAc...) asparagine glycan is linked to Asn-91. Intrachain disulfides connect Cys-102/Cys-105, Cys-108/Cys-163, Cys-136/Cys-144, Cys-175/Cys-178, Cys-301/Cys-368, Cys-386/Cys-409, and Cys-387/Cys-424. 3 N-linked (GlcNAc...) asparagine glycosylation sites follow: Asn-391, Asn-460, and Asn-490. 4 disulfides stabilise this stretch: Cys-529–Cys-547, Cys-535–Cys-569, Cys-538–Cys-554, and Cys-550–Cys-560. IPT/TIG domains lie at 571–673 (PEIS…FRVE), 686–769 (PVLT…FHYK), and 772–864 (PIVL…FRFL). 4 N-linked (GlcNAc...) asparagine glycosylation sites follow: Asn-656, Asn-722, Asn-845, and Asn-901. A helical transmembrane segment spans residues 961 to 981 (ILLIALLVLILLVAVLAVALI). The Cytoplasmic portion of the chain corresponds to 982–1378 (FNSRRRKKQL…RPLSEPPLPT (397 aa)). The tract at residues 1002 to 1026 (SDINDTASGAPNHEESSESRDGTSV) is disordered. The span at 1013 to 1022 (NHEESSESRD) shows a compositional bias: basic and acidic residues. The Protein kinase domain occupies 1059-1322 (IHTDQVIGKG…ALVLEVKQVV (264 aa)). ATP-binding positions include 1065 to 1073 (IGKGHFGVV), Lys-1091, and 1138 to 1141 (LPYM). Catalysis depends on Asp-1185, which acts as the Proton acceptor. Arg-1189 contributes to the ATP binding site. A phosphotyrosine; by autocatalysis mark is found at Tyr-1215, Tyr-1216, Tyr-1330, and Tyr-1337. The disordered stretch occupies residues 1347-1378 (DGSVPPEQVQPSPQHCRSTSKPRPLSEPPLPT). Positions 1349 to 1360 (SVPPEQVQPSPQ) are enriched in low complexity.

The protein belongs to the protein kinase superfamily. Tyr protein kinase family. As to quaternary structure, heterodimer of an alpha chain and a beta chain which are disulfide linked. Binds PLXNB1. Associates with and is negatively regulated by HYAL2. Interacts when phosphorylated with downstream effectors including PIK3R1, PCLG1, GRB2 and GAB1. Interacts with integrin beta1/ITGB1 in a ligand-independent fashion. Isoform sf-Stk forms covalent heterodimers with friend spleen focus-forming virus (FSFFV) gp55. Proteolytic processing yields the two subunits. In terms of processing, autophosphorylated in response to ligand binding on Tyr-1215 and Tyr-1216 in the kinase domain leading to further phosphorylation of Tyr-1330 and Tyr-1337 in the C-terminal multifunctional docking site. Post-translationally, ubiquitinated. Ubiquitination by CBL regulates the receptor stability and activity through proteasomal degradation. O-mannosylation of IPT/TIG domains on Thr or Ser residues by TMEM260 is required for protein maturation. O-mannosylated residues are composed of single mannose glycans that are not elongated or modified. As to expression, expressed in liver, skin, lung, brain, testis and kidney.

It localises to the membrane. It catalyses the reaction L-tyrosyl-[protein] + ATP = O-phospho-L-tyrosyl-[protein] + ADP + H(+). With respect to regulation, in its inactive state, the C-terminal tail interacts with the catalytic domain and inhibits the kinase activity. Upon ligand binding, the C-terminal tail is displaced and becomes phosphorylated, thus increasing the kinase activity. Receptor tyrosine kinase that transduces signals from the extracellular matrix into the cytoplasm by binding to MST1 ligand. Regulates many physiological processes including cell survival, migration and differentiation. Ligand binding at the cell surface induces autophosphorylation of RON on its intracellular domain that provides docking sites for downstream signaling molecules. Following activation by ligand, interacts with the PI3-kinase subunit PIK3R1, PLCG1 or the adapter GAB1. Recruitment of these downstream effectors by RON leads to the activation of several signaling cascades including the RAS-ERK, PI3 kinase-AKT, or PLCgamma-PKC. RON signaling activates the wound healing response by promoting epithelial cell migration, proliferation as well as survival at the wound site. Also plays a role in the innate immune response by regulating the migration and phagocytic activity of macrophages. Alternatively, RON can also promote signals such as cell migration and proliferation in response to growth factors other than MST1 ligand. The polypeptide is Macrophage-stimulating protein receptor (Mst1r) (Mus musculus (Mouse)).